The primary structure comprises 514 residues: 2-isopropylmalate synthase (514 aa).

The region spanning 5–268 (LIIFDTTLRD…DVGIDTTQIV (264 aa)) is the Pyruvate carboxyltransferase domain. Mn(2+) contacts are provided by D14, H202, H204, and N239. Residues 395–514 (KFVSLSQHSE…KDDKLNPQRA (120 aa)) form a regulatory domain region.

The protein belongs to the alpha-IPM synthase/homocitrate synthase family. LeuA type 1 subfamily. Homodimer. Mn(2+) serves as cofactor.

It localises to the cytoplasm. It catalyses the reaction 3-methyl-2-oxobutanoate + acetyl-CoA + H2O = (2S)-2-isopropylmalate + CoA + H(+). It functions in the pathway amino-acid biosynthesis; L-leucine biosynthesis; L-leucine from 3-methyl-2-oxobutanoate: step 1/4. Catalyzes the condensation of the acetyl group of acetyl-CoA with 3-methyl-2-oxobutanoate (2-ketoisovalerate) to form 3-carboxy-3-hydroxy-4-methylpentanoate (2-isopropylmalate). In Burkholderia vietnamiensis (strain G4 / LMG 22486) (Burkholderia cepacia (strain R1808)), this protein is 2-isopropylmalate synthase.